The primary structure comprises 777 residues: Spastin (777 aa).

Composition is skewed to low complexity over residues 1–24 (MVRT…KSNN), 51–76 (HAHS…SSSP), and 85–94 (DDLTPTGSSP). The disordered stretch occupies residues 1 to 103 (MVRTKSSSSS…PRSCNGRGHS (103 aa)). Residues 1-116 (MVRTKSSSSS…KQNLYVVSFP (116 aa)) are Cytoplasmic-facing. Residues 1–215 (MVRTKSSSSS…RALQPLEMAT (215 aa)) are required for localization to punctate cytoplasmic foci. The helical intramembrane region spans 117-137 (IIFLFNVLRSLIYQLFCIFRY). Topologically, residues 138–777 (LYGASTKVLY…WSQDYGDITI (640 aa)) are cytoplasmic. Residues 213–777 (MATNRPGGGY…WSQDYGDITI (565 aa)) form a sufficient for interaction with microtubules and microtubule severing region. The MIT domain maps to 238–313 (HRRAFEYISK…SMARDRLHFL (76 aa)). Positions 327–474 (LKEKQPAPKQ…SSGSGASTPM (148 aa)) are disordered. Polar residues-rich tracts occupy residues 372 to 389 (QNGT…TATG), 406 to 425 (PVTN…TTVG), and 444 to 460 (QFSS…RTPI). A compositionally biased stretch (low complexity) spans 461–471 (NNNASSGSGAS). The tract at residues 462–474 (NNASSGSGASTPM) is required for interaction with microtubules. Position 542 to 549 (542 to 549 (GPPGNGKT)) interacts with ATP.

The protein belongs to the AAA ATPase family. Spastin subfamily. Homohexamer. The homohexamer is stabilized by ATP-binding. The homohexamer may adopt a ring conformation through which microtubules pass prior to being severed. Interacts with microtubules. Interacts with atl; may be involved in microtubule dynamics.

The protein localises to the membrane. It is found in the cytoplasm. It localises to the cytoskeleton. Its subcellular location is the microtubule organizing center. The protein resides in the centrosome. The protein localises to the chromosome. It is found in the lipid droplet. It carries out the reaction n ATP + n H2O + a microtubule = n ADP + n phosphate + (n+1) alpha/beta tubulin heterodimers.. ATP-dependent microtubule severing protein. Stimulates microtubule minus-end depolymerization and poleward microtubule flux in the mitotic spindle. Regulates microtubule stability in the neuromuscular junction synapse. Involved in lipid metabolism by regulating the size and distribution of lipid droplets. Involved in axon regeneration by regulating microtubule severing. In Drosophila willistoni (Fruit fly), this protein is Spastin.